Consider the following 516-residue polypeptide: NADH-quinone oxidoreductase subunit N (516 aa).

The next 14 membrane-spanning stretches (helical) occupy residues 12–32, 37–57, 81–101, 108–128, 131–151, 163–183, 213–233, 246–266, 274–294, 303–323, 341–361, 386–406, 419–439, and 491–511; these read LLPAYLAAGTAVLVLLADLLV, VTISVAALGALATAAGAVLVG, LVAVLVALLTLGVLGLSGPLL, VGEYCFLLAASMTGGVALGAA, LITLIVALETLTLPLYVLVGL, VTFFVVSVVATTLTLLGAALL, VAVALVVVGLTVKVAAVPFHA, VAAYLSTVSKLGGVVALLAVV, ITGLVLALLAVLTMTVGNLVA, LLAWSSVAQAGYILAPLGALA, VAYTVFFVVLELAAFAAVVAL, VGLALALVGLAGLPPGLAGLF, GAAGLALVVAVNAVLGLAYYL, and VVLAAATVVALVVGFAPQLVL.

It belongs to the complex I subunit 2 family. In terms of assembly, NDH-1 is composed of 14 different subunits. Subunits NuoA, H, J, K, L, M, N constitute the membrane sector of the complex.

It localises to the cell membrane. It carries out the reaction a quinone + NADH + 5 H(+)(in) = a quinol + NAD(+) + 4 H(+)(out). Its function is as follows. NDH-1 shuttles electrons from NADH, via FMN and iron-sulfur (Fe-S) centers, to quinones in the respiratory chain. The immediate electron acceptor for the enzyme in this species is believed to be a menaquinone. Couples the redox reaction to proton translocation (for every two electrons transferred, four hydrogen ions are translocated across the cytoplasmic membrane), and thus conserves the redox energy in a proton gradient. The sequence is that of NADH-quinone oxidoreductase subunit N from Salinispora tropica (strain ATCC BAA-916 / DSM 44818 / JCM 13857 / NBRC 105044 / CNB-440).